A 540-amino-acid chain; its full sequence is 2-isopropylmalate synthase (540 aa).

Residues 8–273 (VLIFDTTLRD…FFGRDQDSPT (266 aa)) enclose the Pyruvate carboxyltransferase domain. D17, H208, H210, and N244 together coordinate Mn(2+). The segment at 408–540 (QLQLVQVSCG…AVVLDARPTL (133 aa)) is regulatory domain.

It belongs to the alpha-IPM synthase/homocitrate synthase family. LeuA type 1 subfamily. As to quaternary structure, homodimer. Requires Mn(2+) as cofactor.

It localises to the cytoplasm. It carries out the reaction 3-methyl-2-oxobutanoate + acetyl-CoA + H2O = (2S)-2-isopropylmalate + CoA + H(+). It functions in the pathway amino-acid biosynthesis; L-leucine biosynthesis; L-leucine from 3-methyl-2-oxobutanoate: step 1/4. Functionally, catalyzes the condensation of the acetyl group of acetyl-CoA with 3-methyl-2-oxobutanoate (2-ketoisovalerate) to form 3-carboxy-3-hydroxy-4-methylpentanoate (2-isopropylmalate). In Parasynechococcus marenigrum (strain WH8102), this protein is 2-isopropylmalate synthase.